Reading from the N-terminus, the 359-residue chain is Leafy/floricaula homolog FL1 (359 aa).

A disordered region spans residues Ser-113–Glu-170. Over residues Gln-144–Thr-155 the composition is skewed to basic residues. DNA-binding regions lie at residues Arg-179 to Phe-183, Asn-248 to Tyr-255, and Tyr-320 to Thr-323. The segment covering Ala-340–Ala-352 has biased composition (low complexity). The interval Ala-340 to Tyr-359 is disordered.

Belongs to the FLO/LFY family. In terms of tissue distribution, expressed strongly in the early floral primordium and then successively in the primordia of sepals, petals, stamens and carpels. Also in the leaf primordia and young leaves.

Its subcellular location is the nucleus. In terms of biological role, probable transcription factor. The chain is Leafy/floricaula homolog FL1 (LF1) from Eucalyptus globulus (Tasmanian blue gum).